A 764-amino-acid polypeptide reads, in one-letter code: 5-methyltetrahydropteroyltriglutamate--homocysteine methyltransferase (764 aa).

5-methyltetrahydropteroyltri-L-glutamate-binding positions include 16 to 19 and lysine 115; that span reads RELK. Residues 435 to 437 and glutamate 488 each bind L-homocysteine; that span reads IGS. L-methionine contacts are provided by residues 435-437 and glutamate 488; that span reads IGS. 5-methyltetrahydropteroyltri-L-glutamate-binding positions include 519-520 and tryptophan 565; that span reads RC. L-homocysteine is bound at residue aspartate 603. Aspartate 603 lines the L-methionine pocket. Glutamate 609 serves as a coordination point for 5-methyltetrahydropteroyltri-L-glutamate. Zn(2+)-binding residues include histidine 645, cysteine 647, and glutamate 669. Residue histidine 698 is the Proton donor of the active site. Residue cysteine 730 participates in Zn(2+) binding.

It belongs to the vitamin-B12 independent methionine synthase family. Requires Zn(2+) as cofactor.

It catalyses the reaction 5-methyltetrahydropteroyltri-L-glutamate + L-homocysteine = tetrahydropteroyltri-L-glutamate + L-methionine. The protein operates within amino-acid biosynthesis; L-methionine biosynthesis via de novo pathway; L-methionine from L-homocysteine (MetE route): step 1/1. Catalyzes the transfer of a methyl group from 5-methyltetrahydrofolate to homocysteine resulting in methionine formation. The chain is 5-methyltetrahydropteroyltriglutamate--homocysteine methyltransferase from Burkholderia pseudomallei (strain 1106a).